The primary structure comprises 301 residues: tRNA-cytidine(32) 2-sulfurtransferase (301 aa).

Positions 55 to 60 (SGGKDS) match the PP-loop motif motif. 3 residues coordinate [4Fe-4S] cluster: C130, C133, and C221.

It belongs to the TtcA family. In terms of assembly, homodimer. Requires Mg(2+) as cofactor. [4Fe-4S] cluster is required as a cofactor.

It localises to the cytoplasm. It carries out the reaction cytidine(32) in tRNA + S-sulfanyl-L-cysteinyl-[cysteine desulfurase] + AH2 + ATP = 2-thiocytidine(32) in tRNA + L-cysteinyl-[cysteine desulfurase] + A + AMP + diphosphate + H(+). Its pathway is tRNA modification. Catalyzes the ATP-dependent 2-thiolation of cytidine in position 32 of tRNA, to form 2-thiocytidine (s(2)C32). The sulfur atoms are provided by the cysteine/cysteine desulfurase (IscS) system. The polypeptide is tRNA-cytidine(32) 2-sulfurtransferase (Acinetobacter baumannii (strain AB307-0294)).